The chain runs to 277 residues: Sulfur carrier protein FdhD (277 aa).

The active-site Cysteine persulfide intermediate is the Cys123.

Belongs to the FdhD family.

It localises to the cytoplasm. In terms of biological role, required for formate dehydrogenase (FDH) activity. Acts as a sulfur carrier protein that transfers sulfur from IscS to the molybdenum cofactor prior to its insertion into FDH. This is Sulfur carrier protein FdhD from Pectobacterium atrosepticum (strain SCRI 1043 / ATCC BAA-672) (Erwinia carotovora subsp. atroseptica).